The chain runs to 288 residues: Aquaporin PIP 1-3 (288 aa).

The segment at 1-30 is disordered; sequence MEGKEEDVRLGANRYTERQPIGTAAQGAEE. Transmembrane regions (helical) follow at residues 57–77 and 92–114; these read IAEF…VMGV and IAWS…SGGH. An NPA 1 motif is present at residues 116-118; the sequence is NPA. Transmembrane regions (helical) follow at residues 135 to 155, 177 to 197, and 211 to 231; these read VFYM…VKGF, GDGL…VFSA, and ILAP…TIPI. An NPA 2 motif is present at residues 237 to 239; it reads NPA. A helical membrane pass occupies residues 259–279; the sequence is IFWVGPFIGAALAAIYHVVVI.

It belongs to the MIP/aquaporin (TC 1.A.8) family. PIP (TC 1.A.8.11) subfamily. In terms of tissue distribution, expressed in roots and leaves.

The protein resides in the cell membrane. Functionally, water channel required to facilitate the transport of water across cell membrane. Increases the capacity for root water uptake under water deficit. May play a role in drought avoidance in upland rice. This chain is Aquaporin PIP 1-3 (PIP1-3), found in Oryza sativa subsp. japonica (Rice).